The following is a 77-amino-acid chain: Omega-conotoxin TxVII (77 aa).

The signal sequence occupies residues Met1 to Ala22. Residues Asp23–Asn49 constitute a propeptide that is removed on maturation. 3 disulfide bridges follow: Cys52/Cys67, Cys59/Cys71, and Cys66/Cys75.

In terms of tissue distribution, expressed by the venom duct.

The protein localises to the secreted. Functionally, omega-conotoxins act at presynaptic membranes, they bind and block voltage-gated calcium channels (Cav). Specifically acts on L-type channels. It blocks molluscan dihydropyridine-sensitive calcium channels. This Conus textile (Cloth-of-gold cone) protein is Omega-conotoxin TxVII.